Here is a 389-residue protein sequence, read N- to C-terminus: Cellobiose 2-epimerase (389 aa).

The protein belongs to the cellobiose 2-epimerase family. Monomer.

The catalysed reaction is D-cellobiose = beta-D-glucosyl-(1-&gt;4)-D-mannopyranose. Functionally, catalyzes the reversible epimerization of cellobiose to 4-O-beta-D-glucopyranosyl-D-mannose (Glc-Man). Catalyzes epimerization but also isomerization for beta-1,4- and alpha-1,4-gluco-oligosaccharides. Can use cellobiose, lactose, cellotriose, maltose and maltotriose. The chain is Cellobiose 2-epimerase from Dictyoglomus turgidum (strain DSM 6724 / Z-1310).